Here is a 417-residue protein sequence, read N- to C-terminus: MAP kinase-interacting serine/threonine-protein kinase 1 (417 aa).

Positions 1 to 20 (MVSSQPVPIDDGGKRRKKKR) are disordered. In terms of domain architecture, Protein kinase spans 37-321 (RLTDELLGEG…AAQVLQHPWL (285 aa)). Residues 43–51 (LGEGAYAKV) and lysine 66 contribute to the ATP site. Residue aspartate 158 is the Proton acceptor of the active site. The segment at 397–417 (AHARKGGSHLTHTTVTSQGAT) is disordered. Polar residues predominate over residues 406–417 (LTHTTVTSQGAT).

Belongs to the protein kinase superfamily. CAMK Ser/Thr protein kinase family. Mg(2+) is required as a cofactor.

The enzyme catalyses L-seryl-[protein] + ATP = O-phospho-L-seryl-[protein] + ADP + H(+). The catalysed reaction is L-threonyl-[protein] + ATP = O-phospho-L-threonyl-[protein] + ADP + H(+). Functionally, may play a role in the response to environmental stress and cytokines. Appears to regulate translation by phosphorylating EIF4E, thus increasing the affinity of this protein for the 7-methylguanosine-containing mRNA cap. The protein is MAP kinase-interacting serine/threonine-protein kinase 1 (mknk1) of Xenopus tropicalis (Western clawed frog).